Consider the following 138-residue polypeptide: uncharacterized protein (138 aa).

This is an uncharacterized protein from Methanocaldococcus jannaschii (strain ATCC 43067 / DSM 2661 / JAL-1 / JCM 10045 / NBRC 100440) (Methanococcus jannaschii).